The sequence spans 188 residues: MATVSTNEFKGGLKIMLDNEPCVILENEYVKPGKGQAFNRVRIRKLLTGKVLEKTFKSGDTAEVADVVDIDLDYLYNDGEFYHFMNNSTFEQLAADAKAVGENAKWLVENNTCMLTLWNGNPIAVTPPNFVELEVTETDPGVKGDTQGTGGKPATLSTGAVVRVPLFVQIGEVIKVDTRSAEYVGRVK.

Position 34 is an N6-(3,6-diaminohexanoyl)-5-hydroxylysine (Lys-34).

The protein belongs to the elongation factor P family. In terms of processing, may be beta-lysylated on the epsilon-amino group of Lys-34 by the combined action of EpmA and EpmB, and then hydroxylated on the C5 position of the same residue by EpmC (if this protein is present). Lysylation is critical for the stimulatory effect of EF-P on peptide-bond formation. The lysylation moiety may extend toward the peptidyltransferase center and stabilize the terminal 3-CCA end of the tRNA. Hydroxylation of the C5 position on Lys-34 may allow additional potential stabilizing hydrogen-bond interactions with the P-tRNA.

It localises to the cytoplasm. Its pathway is protein biosynthesis; polypeptide chain elongation. Functionally, involved in peptide bond synthesis. Alleviates ribosome stalling that occurs when 3 or more consecutive Pro residues or the sequence PPG is present in a protein, possibly by augmenting the peptidyl transferase activity of the ribosome. Modification of Lys-34 is required for alleviation. The sequence is that of Elongation factor P from Vibrio cholerae serotype O1 (strain ATCC 39541 / Classical Ogawa 395 / O395).